The chain runs to 412 residues: Serine hydroxymethyltransferase (412 aa).

(6S)-5,6,7,8-tetrahydrofolate contacts are provided by residues Leu-117 and Gly-121 to Leu-123. An N6-(pyridoxal phosphate)lysine modification is found at Lys-226. (6S)-5,6,7,8-tetrahydrofolate-binding positions include Glu-242 and Ser-350–Phe-352.

Belongs to the SHMT family. Homodimer. Pyridoxal 5'-phosphate is required as a cofactor.

The protein localises to the cytoplasm. The catalysed reaction is (6R)-5,10-methylene-5,6,7,8-tetrahydrofolate + glycine + H2O = (6S)-5,6,7,8-tetrahydrofolate + L-serine. The protein operates within one-carbon metabolism; tetrahydrofolate interconversion. It functions in the pathway amino-acid biosynthesis; glycine biosynthesis; glycine from L-serine: step 1/1. Functionally, catalyzes the reversible interconversion of serine and glycine with tetrahydrofolate (THF) serving as the one-carbon carrier. Also exhibits THF-independent aldolase activity toward beta-hydroxyamino acids, producing glycine and aldehydes, via a retro-aldol mechanism. In Methanosarcina acetivorans (strain ATCC 35395 / DSM 2834 / JCM 12185 / C2A), this protein is Serine hydroxymethyltransferase.